The following is an 89-amino-acid chain: Small ribosomal subunit protein uS15 (89 aa).

This sequence belongs to the universal ribosomal protein uS15 family. Part of the 30S ribosomal subunit. Forms a bridge to the 50S subunit in the 70S ribosome, contacting the 23S rRNA.

Its function is as follows. One of the primary rRNA binding proteins, it binds directly to 16S rRNA where it helps nucleate assembly of the platform of the 30S subunit by binding and bridging several RNA helices of the 16S rRNA. Functionally, forms an intersubunit bridge (bridge B4) with the 23S rRNA of the 50S subunit in the ribosome. In Bradyrhizobium sp. (strain BTAi1 / ATCC BAA-1182), this protein is Small ribosomal subunit protein uS15.